The primary structure comprises 228 residues: Uridylate kinase (228 aa).

Position 9–10 (9–10) interacts with ATP; it reads GS. Glycine 44 provides a ligand contact to UMP. Residues glycine 45 and arginine 49 each coordinate ATP. UMP contacts are provided by residues aspartate 66 and 114–120; that span reads IVAAQTT. ATP contacts are provided by threonine 140, tyrosine 146, and aspartate 149.

This sequence belongs to the UMP kinase family. As to quaternary structure, homohexamer.

The protein resides in the cytoplasm. The catalysed reaction is UMP + ATP = UDP + ADP. The protein operates within pyrimidine metabolism; CTP biosynthesis via de novo pathway; UDP from UMP (UMPK route): step 1/1. Inhibited by UTP. Functionally, catalyzes the reversible phosphorylation of UMP to UDP. The polypeptide is Uridylate kinase (Haloarcula marismortui (strain ATCC 43049 / DSM 3752 / JCM 8966 / VKM B-1809) (Halobacterium marismortui)).